The following is a 59-amino-acid chain: UPF0434 protein COSY_0767 (59 aa).

This sequence belongs to the UPF0434 family.

The protein is UPF0434 protein COSY_0767 of Vesicomyosocius okutanii subsp. Calyptogena okutanii (strain HA).